We begin with the raw amino-acid sequence, 134 residues long: Secretin (134 aa).

The N-terminal stretch at 1 to 21 (MATRALLLLLLLPPLLLLAGC) is a signal peptide. A propeptide spanning residues 22 to 31 (AARPAPPRAP) is cleaved from the precursor. V59 is modified (valine amide). S63 carries the phosphoserine modification. Positions 63–134 (SQQDPENNTA…PAAEGSPMPP (72 aa)) are excised as a propeptide.

This sequence belongs to the glucagon family.

Its subcellular location is the secreted. Its function is as follows. Hormone involved in different processes, such as regulation of the pH of the duodenal content, food intake and water homeostasis. Exerts its biological effects by binding to secretin receptor (SCTR), a G-protein coupled receptor expressed in the basolateral domain of several cells. Acts as a key gastrointestinal hormone by regulating the pH of the duodenal content. Secreted by S cells of the duodenum in the crypts of Lieberkuehn and regulates the pH of the duodenum by (1) inhibiting the secretion of gastric acid from the parietal cells of the stomach and (2) stimulating the production of bicarbonate (NaHCO(3)) from the ductal cells of the pancreas. Production of bicarbonate is essential to neutralize the pH and ensure no damage is done to the small intestine by the gastric acid. In addition to regulating the pH of the duodenal content, plays a central role in diet induced thermogenesis: acts as a non-sympathetic brown fat (BAT) activator mediating prandial thermogenesis, which consequentially induces satiation. Mechanistically, secretin released by the gut after a meal binds to secretin receptor (SCTR) in brown adipocytes, activating brown fat thermogenesis by stimulating lipolysis, which is sensed in the brain and promotes satiation. Also able to stimulate lipolysis in white adipocytes. Also plays an important role in cellular osmoregulation: released into the systemic circulation in response to hyperosmolality and acts at different levels in the hypothalamus, pituitary and kidney to regulate water homeostasis. Also plays a role in the central nervous system, possibly by acting as a neuropeptide hormone: required for hippocampal synaptic function and neural progenitor cells maintenance. The sequence is that of Secretin from Sus scrofa (Pig).